Reading from the N-terminus, the 593-residue chain is V-type sodium ATPase catalytic subunit A (593 aa).

Residue G232 to T239 participates in ATP binding.

This sequence belongs to the ATPase alpha/beta chains family.

The catalysed reaction is 4 Na(+)(in) + ATP + H2O = 4 Na(+)(out) + ADP + phosphate + H(+). In terms of biological role, involved in ATP-driven sodium extrusion. This chain is V-type sodium ATPase catalytic subunit A (ntpA), found in Enterococcus hirae (strain ATCC 9790 / DSM 20160 / JCM 8729 / LMG 6399 / NBRC 3181 / NCIMB 6459 / NCDO 1258 / NCTC 12367 / WDCM 00089 / R).